Here is a 548-residue protein sequence, read N- to C-terminus: Membrane-associated tyrosine- and threonine-specific cdc2-inhibitory kinase (548 aa).

The tract at residues 61-89 (PNKQRSWSQPRPQSVSFRSPQNKTPASKL) is disordered. The span at 63-85 (KQRSWSQPRPQSVSFRSPQNKTP) shows a compositional bias: polar residues. The 251-residue stretch at 103–353 (FKSICKLGRG…VDWLLSLPAI (251 aa)) folds into the Protein kinase domain. ATP-binding positions include 109–117 (LGRGSFGEV) and K132. The Proton acceptor role is filled by D226. N231, D244, and G246 together coordinate Mg(2+). The Membrane-association motif signature appears at 376–392 (VYQFIVWLLSFVFQWLN). Positions 464–523 (SPDLLSRPSLGSTSTPRNLSPEFSMRKRSALPLTPNVSRISQDSTGKSRSPSTSHSSSGF) are disordered. Residues 472 to 481 (SLGSTSTPRN) are compositionally biased toward polar residues. A Phosphothreonine; by CDK1 modification is found at T478. Residues 507–521 (STGKSRSPSTSHSSS) are compositionally biased toward low complexity.

It belongs to the protein kinase superfamily. Ser/Thr protein kinase family. WEE1 subfamily. As to quaternary structure, interacts with CDC2-CCNB1 complex. Interacts with Mos during oocyte maturation. Autophosphorylated. Phosphorylated on undefined residues by RSK2 and Mos kinases. Phosphorylation at Thr-478 by cdk1 creates a docking site for plk1/plx1, leading to subsequent phosphorylation by plk1/plk1 and inhibition of the protein kinase activity kinase activity.

The protein resides in the endoplasmic reticulum membrane. Its subcellular location is the golgi apparatus membrane. It catalyses the reaction L-seryl-[protein] + ATP = O-phospho-L-seryl-[protein] + ADP + H(+). The enzyme catalyses L-threonyl-[protein] + ATP = O-phospho-L-threonyl-[protein] + ADP + H(+). Its activity is regulated as follows. Negatively regulated by hyperphosphorylation during mitosis. The plk1/plk1 protein kinase may be required for mitotic phosphorylation. Inactivated during oocyte maturation by phosphorylation by RSK2 and Mos kinase. Acts as a negative regulator of entry into mitosis (G2 to M transition) by phosphorylation of the CDK1 kinase specifically when CDK1 is complexed to cyclins. Mediates phosphorylation of CDK1 predominantly on 'Thr-14'. Also involved in Golgi fragmentation. May be involved in phosphorylation of CDK1 on 'Tyr-15' to a lesser degree, however tyrosine kinase activity is unclear and may be indirect. The polypeptide is Membrane-associated tyrosine- and threonine-specific cdc2-inhibitory kinase (pkmyt1) (Xenopus laevis (African clawed frog)).